Consider the following 387-residue polypeptide: 26S proteasome regulatory subunit 6B homolog (387 aa).

An ATP-binding site is contributed by 175–182 (GPPGTGKT).

The protein belongs to the AAA ATPase family. In terms of assembly, the 26S proteasome consists of a 20S proteasome core and two 19S regulatory subunits. The 20S proteasome core is composed of 28 subunits that are arranged in four stacked rings, resulting in a barrel-shaped structure. The two end rings are each formed by seven alpha subunits, and the two central rings are each formed by seven beta subunits. The catalytic chamber with the active sites is on the inside of the barrel.

It localises to the cytoplasm. The protein localises to the nucleus. In terms of biological role, acts as a regulatory subunit of the 26S proteasome which degrades poly-ubiquitinated proteins in the cytoplasm and in the nucleus. It is essential for the regulated turnover of proteins and for the removal of misfolded proteins. The proteasome is a multicatalytic proteinase complex that is characterized by its ability to cleave peptides with Arg, Phe, Tyr, Leu, and Glu adjacent to the leaving group at neutral or slightly basic pH. This chain is 26S proteasome regulatory subunit 6B homolog, found in Encephalitozoon cuniculi (strain GB-M1) (Microsporidian parasite).